The primary structure comprises 279 residues: DegV domain-containing protein SA1258 (279 aa).

One can recognise a DegV domain in the interval 4 to 278; that stretch reads QIIVTDSTSD…QGAIGLVVLK (275 aa). Residues T61 and S93 each contribute to the hexadecanoate site.

May bind long-chain fatty acids, such as palmitate, and may play a role in lipid transport or fatty acid metabolism. The sequence is that of DegV domain-containing protein SA1258 from Staphylococcus aureus (strain N315).